We begin with the raw amino-acid sequence, 133 residues long: Putative biopolymer transport protein ExbD-like 1 (133 aa).

Residues 1–15 (MNYDNYWDEDKPELN) lie on the Cytoplasmic side of the membrane. A helical transmembrane segment spans residues 16 to 32 (ITPLVDVMLVLLAILMV). Topologically, residues 33 to 133 (TTPTLTYKEE…FLKVSLITSP (101 aa)) are periplasmic.

Belongs to the ExbD/TolR family.

It localises to the cell inner membrane. This chain is Putative biopolymer transport protein ExbD-like 1, found in Helicobacter pylori (strain ATCC 700392 / 26695) (Campylobacter pylori).